Here is a 204-residue protein sequence, read N- to C-terminus: Bombinin-like peptides 1 (204 aa).

Positions 1–16 (MNFKYIVAVSILIASA) form a signal peptide, or 18. Residues N70 and N133 each carry the asparagine amide modification.

The protein belongs to the bombinin family. In terms of tissue distribution, expressed by the skin glands.

It localises to the secreted. In terms of biological role, has antimicrobial activity, but no hemolytic activity. Preference on killing Gram-negative non-enteric bacteria. The protein is Bombinin-like peptides 1 of Bombina orientalis (Oriental fire-bellied toad).